Consider the following 402-residue polypeptide: Heat stress transcription factor A-6a (402 aa).

The segment at 1–28 (MLKPQTPRARRAAHPNSHMASSSSSSSL) is disordered. Positions 212-258 (EVVSLKRDRAALRAEVIMLKQQYNACKSQLIAMEEMVRNIERRQQQT) form a coiled coil. The segment at 216–266 (LKRDRAALRAEVIMLKQQYNACKSQLIAMEEMVRNIERRQQQTIGFFAKVL) is hydrophobic repeat HR-A/B. Residues 290 to 293 (KRQR) carry the Nuclear localization signal motif. Residues 349–358 (DDVWEELDAL) carry the AHA motif.

It belongs to the HSF family. Class A subfamily. As to quaternary structure, homotrimer. In terms of processing, exhibits temperature-dependent phosphorylation.

It localises to the nucleus. Transcriptional regulator that specifically binds DNA of heat shock promoter elements (HSE). This chain is Heat stress transcription factor A-6a (HSFA6B), found in Oryza sativa subsp. japonica (Rice).